The following is a 476-amino-acid chain: ATP synthase subunit beta, chloroplastic (476 aa).

Gly-156–Thr-163 provides a ligand contact to ATP.

Belongs to the ATPase alpha/beta chains family. In terms of assembly, F-type ATPases have 2 components, CF(1) - the catalytic core - and CF(0) - the membrane proton channel. CF(1) has five subunits: alpha(3), beta(3), gamma(1), delta(1), epsilon(1). CF(0) has four main subunits: a(1), b(1), b'(1) and c(9-12).

Its subcellular location is the plastid. It is found in the chloroplast thylakoid membrane. The enzyme catalyses ATP + H2O + 4 H(+)(in) = ADP + phosphate + 5 H(+)(out). Functionally, produces ATP from ADP in the presence of a proton gradient across the membrane. The catalytic sites are hosted primarily by the beta subunits. The chain is ATP synthase subunit beta, chloroplastic from Fucus vesiculosus (Bladder wrack).